We begin with the raw amino-acid sequence, 365 residues long: Outer membrane protein assembly factor BamC (365 aa).

Positions 1 to 16 are cleaved as a signal peptide; that stretch reads MLKKVTPLFLVAAVAA. The N-palmitoyl cysteine moiety is linked to residue cysteine 17. Cysteine 17 carries S-diacylglycerol cysteine lipidation.

The protein belongs to the BamC family. In terms of assembly, part of the Bam complex.

It is found in the cell outer membrane. Functionally, part of the outer membrane protein assembly complex, which is involved in assembly and insertion of beta-barrel proteins into the outer membrane. This Shewanella oneidensis (strain ATCC 700550 / JCM 31522 / CIP 106686 / LMG 19005 / NCIMB 14063 / MR-1) protein is Outer membrane protein assembly factor BamC.